The sequence spans 278 residues: Large ribosomal subunit protein uL2 (278 aa).

Disordered regions lie at residues 33–57 (LIRPLHGTGGRNAHGRITTRHKGGG) and 224–278 (VVMN…GKKR). A compositionally biased stretch (basic residues) spans 45–57 (AHGRITTRHKGGG). Positions 253-268 (PEGRTRKPNKASDKLI) are enriched in basic and acidic residues. Over residues 269–278 (VRRRRTGKKR) the composition is skewed to basic residues.

It belongs to the universal ribosomal protein uL2 family. In terms of assembly, part of the 50S ribosomal subunit. Forms a bridge to the 30S subunit in the 70S ribosome.

Functionally, one of the primary rRNA binding proteins. Required for association of the 30S and 50S subunits to form the 70S ribosome, for tRNA binding and peptide bond formation. It has been suggested to have peptidyltransferase activity; this is somewhat controversial. Makes several contacts with the 16S rRNA in the 70S ribosome. The sequence is that of Large ribosomal subunit protein uL2 from Mycobacteroides abscessus (strain ATCC 19977 / DSM 44196 / CCUG 20993 / CIP 104536 / JCM 13569 / NCTC 13031 / TMC 1543 / L948) (Mycobacterium abscessus).